A 738-amino-acid chain; its full sequence is YTH domain-containing protein 1 (738 aa).

Residues Met1–Glu12 show a composition bias toward basic and acidic residues. The segment at Met1 to Arg341 is disordered. Position 35 is a phosphoserine (Ser35). Residues Glu50 to Arg59 are compositionally biased toward basic and acidic residues. Residues Ser63–Lys90 are compositionally biased toward polar residues. Over residues Ser91–Ile115 the composition is skewed to basic and acidic residues. Lys96 participates in a covalent cross-link: Glycyl lysine isopeptide (Lys-Gly) (interchain with G-Cter in SUMO2). A phosphoserine mark is found at Ser118 and Ser120. Basic and acidic residues predominate over residues Glu124 to Ala144. Position 146 is a phosphoserine (Ser146). Phosphothreonine is present on Thr148. Composition is skewed to basic and acidic residues over residues Gly151 to Ala163 and Ser170 to Thr185. The span at Gly186 to Thr197 shows a compositional bias: polar residues. Residues Glu198–Glu257 are compositionally biased toward acidic residues. The span at Arg258–Ala273 shows a compositional bias: basic and acidic residues. The span at Phe283–Ser292 shows a compositional bias: polar residues. Phosphoserine occurs at positions 311, 318, 320, 321, and 323. Over residues Ser318 to Gly328 the composition is skewed to low complexity. The 138-residue stretch at Ala358 to Phe495 folds into the YTH domain. Residues Lys364 to Asn366 and Trp380 each bind RNA. Phosphoserine is present on Ser427. Trp431 contributes to the RNA binding site. Ser438 is subject to Phosphoserine. Asp479 is an RNA binding site. The segment covering His512 to Pro526 has biased composition (basic residues). Disordered regions lie at residues His512 to Tyr566, Gly618 to Pro654, and Ala680 to Arg738. Over residues Ser527–Tyr566 the composition is skewed to basic and acidic residues. Residue Ser548 is modified to Phosphoserine. Residues Arg690–Arg738 are compositionally biased toward basic and acidic residues.

Interacts with SRSF1. Interacts with SRSF2. Interacts with SRSF3. Interacts with SRSF7. Interacts with SRSF10. Interacts with CPSF6. Interacts with KHDRBS1/SAM68. Interacts with TRA2B. Interacts with KHDRBS3. Interacts with EMD. Interacts with RBMX. Interacts with ZCCHC8. Post-translationally, tyrosine phosphorylated. Ubiquitous.

It is found in the nucleus. The protein localises to the nucleus speckle. In terms of biological role, regulator of alternative splicing that specifically recognizes and binds N6-methyladenosine (m6A)-containing RNAs. M6A is a modification present at internal sites of mRNAs and some non-coding RNAs and plays a role in the efficiency of mRNA splicing, processing and stability. Acts as a key regulator of exon-inclusion or exon-skipping during alternative splicing via interaction with mRNA splicing factors SRSF3 and SRSF10. Specifically binds m6A-containing mRNAs and promotes recruitment of SRSF3 to its mRNA-binding elements adjacent to m6A sites, leading to exon-inclusion during alternative splicing. In contrast, interaction with SRSF3 prevents interaction with SRSF10, a splicing factor that promotes exon skipping: this prevents SRSF10 from binding to its mRNA-binding sites close to m6A-containing regions, leading to inhibit exon skipping during alternative splicing. May also regulate alternative splice site selection. Also involved in nuclear export of m6A-containing mRNAs via interaction with SRSF3: interaction with SRSF3 facilitates m6A-containing mRNA-binding to both SRSF3 and NXF1, promoting mRNA nuclear export. Involved in S-adenosyl-L-methionine homeostasis by regulating expression of MAT2A transcripts, probably by binding m6A-containing MAT2A mRNAs. Also recognizes and binds m6A on other RNA molecules. Involved in random X inactivation mediated by Xist RNA: recognizes and binds m6A-containing Xist and promotes transcription repression activity of Xist. Also recognizes and binds m6A-containing single-stranded DNA. Involved in germline development: required for spermatogonial development in males and oocyte growth and maturation in females, probably via its role in alternative splicing. The protein is YTH domain-containing protein 1 (Ythdc1) of Rattus norvegicus (Rat).